The primary structure comprises 78 residues: MSDIASRVKAIIVDKLGVDENEVVTEASFTNDLGADSLDTVELIMEFEKEFDIQIPDDQAENIATVGQAISYIEEAKK.

The region spanning 2–77 (SDIASRVKAI…QAISYIEEAK (76 aa)) is the Carrier domain. Serine 37 carries the post-translational modification O-(pantetheine 4'-phosphoryl)serine.

This sequence belongs to the acyl carrier protein (ACP) family. In terms of processing, 4'-phosphopantetheine is transferred from CoA to a specific serine of apo-ACP by AcpS. This modification is essential for activity because fatty acids are bound in thioester linkage to the sulfhydryl of the prosthetic group.

Its subcellular location is the cytoplasm. It functions in the pathway lipid metabolism; fatty acid biosynthesis. In terms of biological role, carrier of the growing fatty acid chain in fatty acid biosynthesis. The polypeptide is Acyl carrier protein (Flavobacterium johnsoniae (strain ATCC 17061 / DSM 2064 / JCM 8514 / BCRC 14874 / CCUG 350202 / NBRC 14942 / NCIMB 11054 / UW101) (Cytophaga johnsonae)).